We begin with the raw amino-acid sequence, 174 residues long: Ubiquitin-like protein 4B (174 aa).

The region spanning 1 to 76 (MFLTVKLLLG…INVIMQPLEK (76 aa)) is the Ubiquitin-like domain. Residues 141 to 156 (EPHVEPAGERELEAKA) show a composition bias toward basic and acidic residues. The disordered stretch occupies residues 141-174 (EPHVEPAGERELEAKARPQSSCDMEEKEEAAADQ). A compositionally biased stretch (acidic residues) spans 163-174 (DMEEKEEAAADQ).

The protein localises to the cytoplasm. The sequence is that of Ubiquitin-like protein 4B (UBL4B) from Homo sapiens (Human).